The chain runs to 331 residues: MKASSVLLGLAPLAALAAPTPEAELSARQAQQSIDALMKAKGKLYFGTATDQGLLNTGKNSAIIKADFGQVTPENSMKCQSLENTRGQYNWAPADALVNFAVSNNKSIRGHTLIWHSQLPGWVNNINDRNQLTTVIQNHVATVMGRWKGKIRAWDVVNEIFNEDGTMRQSVFSRVLGEDFVRIAFEAARKADPNAKLYINDYNLDRPNAGKLTKGMVGHVKKWVGAGVPIDGIGRQGHLQSGQGNGLGQGIKGLGDSGVKEVGGNELDIQGNNGNEFGGGNKACLPVPACVGIPAWGVRDNDSWRPQGNPLLFDSNYNPKPAYNSVVQALK.

The first 17 residues, 1–17, serve as a signal peptide directing secretion; sequence MKASSVLLGLAPLAALA. Residues 31–329 form the GH10 domain; it reads QQSIDALMKA…KPAYNSVVQA (299 aa). Residue asparagine 105 is glycosylated (N-linked (GlcNAc...) asparagine). Residue glutamate 159 is the Proton donor of the active site. Glutamate 266 serves as the catalytic Nucleophile. An intrachain disulfide couples cysteine 284 to cysteine 290. A glycan (N-linked (GlcNAc...) asparagine) is linked at asparagine 301.

The protein belongs to the glycosyl hydrolase 10 (cellulase F) family.

It localises to the secreted. It carries out the reaction Endohydrolysis of (1-&gt;4)-beta-D-xylosidic linkages in xylans.. The protein operates within glycan degradation; xylan degradation. Endo-1,4-beta-xylanase involved in the hydrolysis of xylan, a major structural heterogeneous polysaccharide found in plant biomass representing the second most abundant polysaccharide in the biosphere, after cellulose. Accounts for approximately 70 percent of the endoxylanase activity in the culture filtrate. This is Endo-1,4-beta-xylanase 2 (XYL2) from Pyricularia grisea (Crabgrass-specific blast fungus).